We begin with the raw amino-acid sequence, 429 residues long: Glutamate-1-semialdehyde 2,1-aminomutase 2 (429 aa).

Lys268 carries the N6-(pyridoxal phosphate)lysine modification.

The protein belongs to the class-III pyridoxal-phosphate-dependent aminotransferase family. HemL subfamily. Homodimer. It depends on pyridoxal 5'-phosphate as a cofactor.

It is found in the cytoplasm. It catalyses the reaction (S)-4-amino-5-oxopentanoate = 5-aminolevulinate. It participates in porphyrin-containing compound metabolism; protoporphyrin-IX biosynthesis; 5-aminolevulinate from L-glutamyl-tRNA(Glu): step 2/2. This chain is Glutamate-1-semialdehyde 2,1-aminomutase 2, found in Staphylococcus aureus (strain USA300).